The following is a 99-amino-acid chain: Prostate and testis expressed protein 14 (99 aa).

Positions 1-21 are cleaved as a signal peptide; that stretch reads MGKNILLLLLGLSFVIGFLQA. In terms of domain architecture, UPAR/Ly6 spans 22-99; sequence LRCLECDMLN…CHDQSLCNEF (78 aa). 5 disulfides stabilise this stretch: Cys24–Cys51, Cys27–Cys36, Cys43–Cys69, Cys73–Cys89, and Cys90–Cys96. An N-linked (GlcNAc...) asparagine glycan is attached at Asn40. 2 N-linked (GlcNAc...) asparagine glycosylation sites follow: Asn75 and Asn82.

The protein belongs to the PATE family. As to quaternary structure, monomer.

It localises to the secreted. The protein is Prostate and testis expressed protein 14 of Rattus norvegicus (Rat).